Here is a 299-residue protein sequence, read N- to C-terminus: Phosphoribosylaminoimidazole-succinocarboxamide synthase (299 aa).

Belongs to the SAICAR synthetase family.

It carries out the reaction 5-amino-1-(5-phospho-D-ribosyl)imidazole-4-carboxylate + L-aspartate + ATP = (2S)-2-[5-amino-1-(5-phospho-beta-D-ribosyl)imidazole-4-carboxamido]succinate + ADP + phosphate + 2 H(+). The protein operates within purine metabolism; IMP biosynthesis via de novo pathway; 5-amino-1-(5-phospho-D-ribosyl)imidazole-4-carboxamide from 5-amino-1-(5-phospho-D-ribosyl)imidazole-4-carboxylate: step 1/2. The protein is Phosphoribosylaminoimidazole-succinocarboxamide synthase of Desulfatibacillum aliphaticivorans.